Reading from the N-terminus, the 273-residue chain is 1,4-dihydroxy-2-naphthoyl-CoA synthase (273 aa).

Residues Arg34, Ser73–Gln77, Tyr85, Tyr117–Gly121, Thr143, Ser149, Tyr246, and Lys261 contribute to the substrate site. Position 142 to 144 (Gln142 to Gly144) interacts with hydrogencarbonate. Positions Gly254 to Asp265 are enriched in basic and acidic residues. The segment at Gly254–Pro273 is disordered.

This sequence belongs to the enoyl-CoA hydratase/isomerase family. MenB subfamily. It depends on hydrogencarbonate as a cofactor.

It catalyses the reaction 2-succinylbenzoyl-CoA + H(+) = 1,4-dihydroxy-2-naphthoyl-CoA + H2O. It participates in quinol/quinone metabolism; 1,4-dihydroxy-2-naphthoate biosynthesis; 1,4-dihydroxy-2-naphthoate from chorismate: step 6/7. Its pathway is quinol/quinone metabolism; menaquinone biosynthesis. Functionally, converts o-succinylbenzoyl-CoA (OSB-CoA) to 1,4-dihydroxy-2-naphthoyl-CoA (DHNA-CoA). The protein is 1,4-dihydroxy-2-naphthoyl-CoA synthase of Staphylococcus aureus (strain MRSA252).